The primary structure comprises 169 residues: Ribosome maturation factor RimM (169 aa).

One can recognise a PRC barrel domain in the interval 97–169; it reads NDEAYFTDLI…KIVVDWEYDY (73 aa).

Belongs to the RimM family. In terms of assembly, binds ribosomal protein uS19.

Its subcellular location is the cytoplasm. In terms of biological role, an accessory protein needed during the final step in the assembly of 30S ribosomal subunit, possibly for assembly of the head region. Essential for efficient processing of 16S rRNA. May be needed both before and after RbfA during the maturation of 16S rRNA. It has affinity for free ribosomal 30S subunits but not for 70S ribosomes. The chain is Ribosome maturation factor RimM from Francisella philomiragia subsp. philomiragia (strain ATCC 25017 / CCUG 19701 / FSC 153 / O#319-036).